An 89-amino-acid polypeptide reads, in one-letter code: MAISKEKKNEIIAQYARHEGDTGSVEVQVAVLTWEINHLNSHIKEHKKDHATYRGLMKKIGHRRNLLAYLRRTDVNRYRELIQSLGLRR.

It belongs to the universal ribosomal protein uS15 family. As to quaternary structure, part of the 30S ribosomal subunit. Forms a bridge to the 50S subunit in the 70S ribosome, contacting the 23S rRNA.

Functionally, one of the primary rRNA binding proteins, it binds directly to 16S rRNA where it helps nucleate assembly of the platform of the 30S subunit by binding and bridging several RNA helices of the 16S rRNA. Forms an intersubunit bridge (bridge B4) with the 23S rRNA of the 50S subunit in the ribosome. This Streptococcus pyogenes serotype M2 (strain MGAS10270) protein is Small ribosomal subunit protein uS15.